Here is a 205-residue protein sequence, read N- to C-terminus: ATP phosphoribosyltransferase (205 aa).

It belongs to the ATP phosphoribosyltransferase family. Short subfamily.

It is found in the cytoplasm. It catalyses the reaction 1-(5-phospho-beta-D-ribosyl)-ATP + diphosphate = 5-phospho-alpha-D-ribose 1-diphosphate + ATP. The protein operates within amino-acid biosynthesis; L-histidine biosynthesis; L-histidine from 5-phospho-alpha-D-ribose 1-diphosphate: step 1/9. In terms of biological role, catalyzes the condensation of ATP and 5-phosphoribose 1-diphosphate to form N'-(5'-phosphoribosyl)-ATP (PR-ATP). Has a crucial role in the pathway because the rate of histidine biosynthesis seems to be controlled primarily by regulation of HisG enzymatic activity. This chain is ATP phosphoribosyltransferase, found in Thermococcus gammatolerans (strain DSM 15229 / JCM 11827 / EJ3).